A 494-amino-acid chain; its full sequence is Alpha-amylase 1 (494 aa).

The first 18 residues, 1–18 (MFLAKSIVCLALLAVANA), serve as a signal peptide directing secretion. A disulfide bridge connects residues cysteine 46 and cysteine 102. Ca(2+)-binding residues include asparagine 116, arginine 165, and aspartate 174. A disulfide bond links cysteine 153 and cysteine 167. Arginine 202 contacts chloride. The Nucleophile role is filled by aspartate 204. Ca(2+) is bound at residue histidine 208. Catalysis depends on glutamate 241, which acts as the Proton donor. Positions 304 and 343 each coordinate chloride. A disordered region spans residues 350 to 370 (FTDTDQGPPTTDGQNIASPSF). Over residues 351 to 363 (TDTDQGPPTTDGQ) the composition is skewed to low complexity. Disulfide bonds link cysteine 376–cysteine 382 and cysteine 448–cysteine 460.

The protein belongs to the glycosyl hydrolase 13 family. In terms of assembly, monomer. Ca(2+) serves as cofactor. It depends on chloride as a cofactor.

It catalyses the reaction Endohydrolysis of (1-&gt;4)-alpha-D-glucosidic linkages in polysaccharides containing three or more (1-&gt;4)-alpha-linked D-glucose units.. In Drosophila ananassae (Fruit fly), this protein is Alpha-amylase 1 (Amy35).